The chain runs to 177 residues: Probable chemoreceptor glutamine deamidase CheD (177 aa).

It belongs to the CheD family.

It carries out the reaction L-glutaminyl-[protein] + H2O = L-glutamyl-[protein] + NH4(+). Probably deamidates glutamine residues to glutamate on methyl-accepting chemotaxis receptors (MCPs), playing an important role in chemotaxis. In Pseudomonas fluorescens (strain SBW25), this protein is Probable chemoreceptor glutamine deamidase CheD.